Reading from the N-terminus, the 162-residue chain is SsrA-binding protein (162 aa).

Belongs to the SmpB family.

The protein resides in the cytoplasm. Required for rescue of stalled ribosomes mediated by trans-translation. Binds to transfer-messenger RNA (tmRNA), required for stable association of tmRNA with ribosomes. tmRNA and SmpB together mimic tRNA shape, replacing the anticodon stem-loop with SmpB. tmRNA is encoded by the ssrA gene; the 2 termini fold to resemble tRNA(Ala) and it encodes a 'tag peptide', a short internal open reading frame. During trans-translation Ala-aminoacylated tmRNA acts like a tRNA, entering the A-site of stalled ribosomes, displacing the stalled mRNA. The ribosome then switches to translate the ORF on the tmRNA; the nascent peptide is terminated with the 'tag peptide' encoded by the tmRNA and targeted for degradation. The ribosome is freed to recommence translation, which seems to be the essential function of trans-translation. The polypeptide is SsrA-binding protein (Buchnera aphidicola subsp. Acyrthosiphon pisum (strain 5A)).